Consider the following 107-residue polypeptide: Large ribosomal subunit protein uL24 (107 aa).

It belongs to the universal ribosomal protein uL24 family. Part of the 50S ribosomal subunit.

Functionally, one of two assembly initiator proteins, it binds directly to the 5'-end of the 23S rRNA, where it nucleates assembly of the 50S subunit. One of the proteins that surrounds the polypeptide exit tunnel on the outside of the subunit. This is Large ribosomal subunit protein uL24 from Streptomyces griseus subsp. griseus (strain JCM 4626 / CBS 651.72 / NBRC 13350 / KCC S-0626 / ISP 5235).